A 384-amino-acid chain; its full sequence is 23S rRNA (uracil(747)-C(5))-methyltransferase RlmC (384 aa).

[4Fe-4S] cluster-binding residues include Cys3, Cys11, Cys14, and Cys87. Residues Gln212, Phe241, Glu262, and Asn309 each contribute to the S-adenosyl-L-methionine site. Cys336 (nucleophile) is an active-site residue.

The protein belongs to the class I-like SAM-binding methyltransferase superfamily. RNA M5U methyltransferase family. RlmC subfamily.

It catalyses the reaction uridine(747) in 23S rRNA + S-adenosyl-L-methionine = 5-methyluridine(747) in 23S rRNA + S-adenosyl-L-homocysteine + H(+). Catalyzes the formation of 5-methyl-uridine at position 747 (m5U747) in 23S rRNA. This Shewanella amazonensis (strain ATCC BAA-1098 / SB2B) protein is 23S rRNA (uracil(747)-C(5))-methyltransferase RlmC.